Here is a 390-residue protein sequence, read N- to C-terminus: RNA binding protein fox-1 homolog 2 (390 aa).

The segment at 1 to 127 (MQNEPLTPGY…STPKRLHVSN (127 aa)) is disordered. 2 stretches are compositionally biased toward polar residues: residues 18–28 (SQGNQEPTTTP) and 65–95 (GEHN…SLTT). Histidine 67 is subject to Phosphothreonine. Over residues 97 to 117 (GGAQTDGQQSQTQSSENSESK) the composition is skewed to low complexity. An RRM domain is found at 121–197 (KRLHVSNIPF…RKIEVNNATA (77 aa)). Omega-N-methylarginine is present on residues glycine 249, glycine 267, phenylalanine 268, alanine 277, and arginine 281. Asymmetric dimethylarginine occurs at positions 297 and 329. Residues arginine 381 and arginine 386 each carry the asymmetric dimethylarginine; alternate modification. Residues arginine 381 and arginine 386 each carry the omega-N-methylarginine; alternate modification.

As to quaternary structure, interacts with ER-alpha N-terminal activation domain. Interacts with RBPMS; the interaction allows cooperative assembly of stable cell-specific alternative splicing regulatory complexes.

The protein localises to the nucleus. It localises to the cytoplasm. Its function is as follows. RNA-binding protein that regulates alternative splicing events by binding to 5'-UGCAUGU-3' elements. Prevents binding of U2AF2 to the 3'-splice site. Regulates alternative splicing of tissue-specific exons and of differentially spliced exons during erythropoiesis. RNA-binding protein that seems to act as a coregulatory factor of ER-alpha. Together with RNA binding proteins RBPMS and MBNL1/2, activates vascular smooth muscle cells alternative splicing events. The protein is RNA binding protein fox-1 homolog 2 (RBFOX2) of Homo sapiens (Human).